An 88-amino-acid polypeptide reads, in one-letter code: Small ribosomal subunit protein bS20 (88 aa).

The disordered stretch occupies residues 1 to 25 (MANSPQAKKRARQNERRAEVNKARR). Over residues 12 to 22 (RQNERRAEVNK) the composition is skewed to basic and acidic residues.

The protein belongs to the bacterial ribosomal protein bS20 family.

In terms of biological role, binds directly to 16S ribosomal RNA. In Dinoroseobacter shibae (strain DSM 16493 / NCIMB 14021 / DFL 12), this protein is Small ribosomal subunit protein bS20.